Consider the following 302-residue polypeptide: Homoserine kinase (302 aa).

92-102 lines the ATP pocket; that stretch reads PLARGLGSSAT.

It belongs to the GHMP kinase family. Homoserine kinase subfamily.

It is found in the cytoplasm. The enzyme catalyses L-homoserine + ATP = O-phospho-L-homoserine + ADP + H(+). It functions in the pathway amino-acid biosynthesis; L-threonine biosynthesis; L-threonine from L-aspartate: step 4/5. In terms of biological role, catalyzes the ATP-dependent phosphorylation of L-homoserine to L-homoserine phosphate. The chain is Homoserine kinase from Trichormus variabilis (strain ATCC 29413 / PCC 7937) (Anabaena variabilis).